Consider the following 477-residue polypeptide: Dihydrolipoyl dehydrogenase (477 aa).

FAD contacts are provided by residues 41-50 (EKRGALGGTC), Lys59, Gly124, and 153-155 (TGS). Cys50 and Cys55 are disulfide-bonded. NAD(+) contacts are provided by residues 190–197 (GGGVIGLE), Glu213, Val248, and Gly282. Residues Asp323 and 330-333 (MLAH) each bind FAD. His456 acts as the Proton acceptor in catalysis.

The protein belongs to the class-I pyridine nucleotide-disulfide oxidoreductase family. Homodimer. FAD serves as cofactor.

The catalysed reaction is N(6)-[(R)-dihydrolipoyl]-L-lysyl-[protein] + NAD(+) = N(6)-[(R)-lipoyl]-L-lysyl-[protein] + NADH + H(+). In Trypanosoma cruzi, this protein is Dihydrolipoyl dehydrogenase (LPD).